Here is a 71-residue protein sequence, read N- to C-terminus: MWSDSLVSRICVPIIVVCTSIALLNVVSFRSECSCVVHISGAAIDIRGCSFTPDFIEYAKTLRVFNHRYQE.

Topologically, residues 1–4 (MWSD) are lumenal. A helical membrane pass occupies residues 5-27 (SLVSRICVPIIVVCTSIALLNVV). Residues 28–71 (SFRSECSCVVHISGAAIDIRGCSFTPDFIEYAKTLRVFNHRYQE) lie on the Cytoplasmic side of the membrane.

The protein belongs to the Tymovirales TGBp3 protein family.

Its subcellular location is the host endoplasmic reticulum membrane. In terms of biological role, plays a role in viral cell-to-cell propagation, by facilitating genome transport to neighboring plant cells through plasmosdesmata. May induce the formation of granular vesicles derived from the Endoplasmic reticulum, which align on actin filaments. The sequence is that of Movement protein TGBp3 from Populus balsamifera (Balsam poplar).